The sequence spans 205 residues: CASP-like protein 2A1 (205 aa).

Over Met1 to Thr35 the chain is Cytoplasmic. The chain crosses the membrane as a helical span at residues Val36 to Leu56. Over Lys57 to Tyr77 the chain is Extracellular. The chain crosses the membrane as a helical span at residues Leu78–Met98. Residues Pro99–Arg106 are Cytoplasmic-facing. Residues Ala107–Val127 form a helical membrane-spanning segment. At Ser128–Lys157 the chain is on the extracellular side. Residues Thr158–Ile178 form a helical membrane-spanning segment. The Cytoplasmic segment spans residues Ser179–Ser205.

This sequence belongs to the Casparian strip membrane proteins (CASP) family. As to quaternary structure, homodimer and heterodimers.

The protein localises to the cell membrane. The chain is CASP-like protein 2A1 from Vitis vinifera (Grape).